The primary structure comprises 420 residues: Cytochrome P-450 monooxygenase DoxA (420 aa).

Heme is bound at residue Cys367.

This sequence belongs to the cytochrome P450 family. As to quaternary structure, monomer. Heme serves as cofactor.

Its subcellular location is the cytoplasm. The enzyme catalyses 13-deoxydaunorubicin + NADPH + O2 + H(+) = 13-dihydrodaunorubicin + NADP(+) + H2O. It catalyses the reaction 13-dihydrodaunorubicin + NADPH + O2 + H(+) = daunorubicin + NADP(+) + 2 H2O. It carries out the reaction 13-deoxycarminomycin + NADPH + O2 + H(+) = 13-dihydrocarminomycin + NADP(+) + H2O. The catalysed reaction is 13-dihydrocarminomycin + NADPH + O2 + H(+) = carminomycin + NADP(+) + 2 H2O. The enzyme catalyses daunorubicin + NADPH + O2 + H(+) = doxorubicin + NADP(+) + H2O. The protein operates within antibiotic biosynthesis; daunorubicin biosynthesis. It functions in the pathway antibiotic biosynthesis; carminomycin biosynthesis. It participates in antibiotic biosynthesis; doxorubicin biosynthesis. Its function is as follows. Involved in the biosynthesis of the anthracyclines carminomycin, daunorubicin (daunomycin) and doxorubicin (adriamycin) which are aromatic polyketide antibiotics that exhibit high cytotoxicity and are widely applied in the chemotherapy of a variety of cancers. In vivo, DoxA catalyzes the C-13 hydroxylation of 13-deoxycarminomycin and 13-deoxydaunorubicin to yield 13-dihydrocarminomycin and 13-dihydrodaunorubicin, respectively, as well as the oxidation of these 13-dihydro-anthracyclines to their respective 13-keto forms, carminomycin and daunorubicin. In vivo, it also catalyzes the C-14 hydroxylation of daunorubicin to form doxorubicin. It can only use NADP. DoxA acts jointly with DnrV. This is Cytochrome P-450 monooxygenase DoxA (doxA) from Streptomyces peucetius subsp. caesius.